We begin with the raw amino-acid sequence, 252 residues long: Uridylate kinase (252 aa).

An ATP-binding site is contributed by 27–30 (KLGG). Residue Gly-68 participates in UMP binding. ATP contacts are provided by Gly-69 and Arg-73. Residues Asp-88 and 149-156 (MGLPYFST) contribute to the UMP site. ATP contacts are provided by Tyr-182 and Asp-185.

This sequence belongs to the UMP kinase family. In terms of assembly, homohexamer.

It is found in the cytoplasm. It carries out the reaction UMP + ATP = UDP + ADP. It participates in pyrimidine metabolism; CTP biosynthesis via de novo pathway; UDP from UMP (UMPK route): step 1/1. Its activity is regulated as follows. Inhibited by UTP. Functionally, catalyzes the reversible phosphorylation of UMP to UDP. This Mycobacterium sp. (strain JLS) protein is Uridylate kinase.